Consider the following 268-residue polypeptide: Small ribosomal subunit protein uS3 (268 aa).

Residues 38–106 enclose the KH type-2 domain; sequence IRKLLATGME…QVQLNILEVK (69 aa). The disordered stretch occupies residues 218-268; sequence VAAPAGDRPRRERPSRPRRSGATGTTATSTEAGRAATATADAPATTEQKEG. Positions 237–268 are enriched in low complexity; the sequence is SGATGTTATSTEAGRAATATADAPATTEQKEG.

It belongs to the universal ribosomal protein uS3 family. In terms of assembly, part of the 30S ribosomal subunit. Forms a tight complex with proteins S10 and S14.

Binds the lower part of the 30S subunit head. Binds mRNA in the 70S ribosome, positioning it for translation. This Rhodococcus jostii (strain RHA1) protein is Small ribosomal subunit protein uS3.